The sequence spans 144 residues: Large ribosomal subunit protein uL15 (144 aa).

The interval 1–54 (MHLNTLKPAEGAKKLAKRKGRGQGSGNGKMAGRGHKGQKSRSGGMPKIGFEGGQ) is disordered. A compositionally biased stretch (gly residues) spans 22–31 (GQGSGNGKMA).

Belongs to the universal ribosomal protein uL15 family. In terms of assembly, part of the 50S ribosomal subunit.

In terms of biological role, binds to the 23S rRNA. The chain is Large ribosomal subunit protein uL15 from Hydrogenovibrio crunogenus (strain DSM 25203 / XCL-2) (Thiomicrospira crunogena).